Consider the following 588-residue polypeptide: Endogenous retrovirus group K member 7 Env polyprotein (588 aa).

A fusion peptide region spans residues 355 to 375 (FIFTLIAVIMGLIAVTATAAV). A helical membrane pass occupies residues 522–542 (IGSTTIINLILILVCLFCLLL).

This sequence belongs to the beta type-B retroviral envelope protein family. HERV class-II K(HML-2) env subfamily. The surface (SU) and transmembrane (TM) proteins form a heterodimer. SU and TM are attached by noncovalent interactions or by a labile interchain disulfide bond. In terms of processing, specific enzymatic cleavages in vivo yield the mature SU and TM proteins. In terms of tissue distribution, expressed in lung, placenta, testis and peripheral blood lymphocytes.

The protein localises to the virion. It is found in the cell membrane. Functionally, retroviral envelope proteins mediate receptor recognition and membrane fusion during early infection. Endogenous envelope proteins may have kept, lost or modified their original function during evolution. SU mediates receptor recognition. Its function is as follows. TM anchors the envelope heterodimer to the viral membrane through one transmembrane domain. The other hydrophobic domain, called fusion peptide, mediates fusion of the viral membrane with the target cell membrane. This chain is Endogenous retrovirus group K member 7 Env polyprotein (ERVK-7), found in Homo sapiens (Human).